A 404-amino-acid polypeptide reads, in one-letter code: Cysteine desulfurase IscS (404 aa).

Residues 75–76 (AT), N155, Q183, and 203–205 (SAH) contribute to the pyridoxal 5'-phosphate site. Residue K206 is modified to N6-(pyridoxal phosphate)lysine. T243 serves as a coordination point for pyridoxal 5'-phosphate. C328 functions as the Cysteine persulfide intermediate in the catalytic mechanism. C328 contacts [2Fe-2S] cluster.

This sequence belongs to the class-V pyridoxal-phosphate-dependent aminotransferase family. NifS/IscS subfamily. In terms of assembly, homodimer. Forms a heterotetramer with IscU, interacts with other sulfur acceptors. Requires pyridoxal 5'-phosphate as cofactor.

The protein resides in the cytoplasm. The catalysed reaction is (sulfur carrier)-H + L-cysteine = (sulfur carrier)-SH + L-alanine. Its pathway is cofactor biosynthesis; iron-sulfur cluster biosynthesis. Master enzyme that delivers sulfur to a number of partners involved in Fe-S cluster assembly, tRNA modification or cofactor biosynthesis. Catalyzes the removal of elemental sulfur atoms from cysteine to produce alanine. Functions as a sulfur delivery protein for Fe-S cluster synthesis onto IscU, an Fe-S scaffold assembly protein, as well as other S acceptor proteins. This Pseudomonas aeruginosa (strain LESB58) protein is Cysteine desulfurase IscS.